Here is a 652-residue protein sequence, read N- to C-terminus: Na(+)/H(+) antiporter NhaA 1 (652 aa).

Positions 1–427 (MTGELPRGRR…VGASLTTWLV (427 aa)) are na(+)/H(+) antiporter NhaA. Transmembrane regions (helical) follow at residues 27–47 (AFLH…VVAL), 78–98 (LRYW…GLEV), 114–134 (TLPL…YLAF), 142–162 (VGWG…LAVL), 173–193 (FLLT…AIAY), 200–220 (TALF…AAGG), 227–247 (LLLG…PVVV), 312–332 (LIVP…ELLA), 343–363 (VLFA…MLVA), 376–396 (WAAI…ALLI), and 411–431 (IGIL…FRLA). In terms of domain architecture, Thioredoxin spans 428–623 (FRLAARLPPA…LSAAVTSAFA (196 aa)). Residues 626–652 (RLRPRDDREPDRRREVGSEQPDEEPGT) form a disordered region. Over residues 628–642 (RPRDDREPDRRREVG) the composition is skewed to basic and acidic residues.

It in the N-terminal section; belongs to the NhaA Na(+)/H(+) (TC 2.A.33) antiporter family.

It localises to the cell membrane. The catalysed reaction is Na(+)(in) + 2 H(+)(out) = Na(+)(out) + 2 H(+)(in). In terms of biological role, na(+)/H(+) antiporter that extrudes sodium in exchange for external protons. In Salinispora arenicola (strain CNS-205), this protein is Na(+)/H(+) antiporter NhaA 1.